We begin with the raw amino-acid sequence, 188 residues long: Actin-related protein 2/3 complex subunit 3 (188 aa).

It belongs to the ARPC3 family. As to quaternary structure, component of the Arp2/3 complex.

Its subcellular location is the cytoplasm. It is found in the cytoskeleton. Functionally, functions as a component of the Arp2/3 complex which is involved in regulation of actin polymerization and together with an activating nucleation-promoting factor (NPF) mediates the formation of branched actin networks. This chain is Actin-related protein 2/3 complex subunit 3, found in Entamoeba histolytica (strain ATCC 30459 / HM-1:IMSS / ABRM).